The following is a 395-amino-acid chain: Elongation factor Tu (395 aa).

A tr-type G domain is found at 6–205; it reads KPHINVGTIG…NALEKISLPT (200 aa). The tract at residues 15–22 is G1; the sequence is GHVDHGKT. 15 to 22 contacts GTP; the sequence is GHVDHGKT. Thr22 is a binding site for Mg(2+). Residues 59 to 63 are G2; sequence GITIS. Residues 80–83 form a G3 region; sequence DCPG. GTP contacts are provided by residues 80-84 and 135-138; these read DCPGH and NKCD. The tract at residues 135–138 is G4; it reads NKCD. Residues 173-175 are G5; that stretch reads SAV.

The protein belongs to the TRAFAC class translation factor GTPase superfamily. Classic translation factor GTPase family. EF-Tu/EF-1A subfamily. Monomer.

It is found in the cytoplasm. It catalyses the reaction GTP + H2O = GDP + phosphate + H(+). Functionally, GTP hydrolase that promotes the GTP-dependent binding of aminoacyl-tRNA to the A-site of ribosomes during protein biosynthesis. The polypeptide is Elongation factor Tu (Ehrlichia chaffeensis (strain ATCC CRL-10679 / Arkansas)).